Here is a 444-residue protein sequence, read N- to C-terminus: Maintenance of mitochondrial morphology protein 1 (444 aa).

The segment covering 1–16 (MKGVENTLSQSESVNR) has biased composition (polar residues). A disordered region spans residues 1–20 (MKGVENTLSQSESVNRGYNG). Residues 1-107 (MKGVENTLSQ…TFSSRSFAEG (107 aa)) are Lumenal-facing. Residues 108-128 (LVVGQLSVIVVLIFFIKFFIF) form a helical membrane-spanning segment. Topologically, residues 129–444 (SDGPAKTGGG…QEEDPSRAPE (316 aa)) are cytoplasmic. The disordered stretch occupies residues 136–157 (GGGGGSSAESRSSGFTGSPLTS). Positions 142-157 (SAESRSSGFTGSPLTS) are enriched in low complexity. The 215-residue stretch at 204-418 (SPESLDWFNV…EPRFQFVKLP (215 aa)) folds into the SMP-LTD domain. Residues 425 to 444 (KNTREEKSDMQEEDPSRAPE) are disordered. A compositionally biased stretch (basic and acidic residues) spans 426 to 444 (NTREEKSDMQEEDPSRAPE).

The protein belongs to the MMM1 family. In terms of assembly, homodimer. Component of the ER-mitochondria encounter structure (ERMES) or MDM complex, composed of MMM1, MDM10, MDM12 and MDM34. An MMM1 homodimer associates with one molecule of MDM12 on each side in a pairwise head-to-tail manner, and the SMP-LTD domains of MMM1 and MDM12 generate a continuous hydrophobic tunnel for phospholipid trafficking.

It is found in the endoplasmic reticulum membrane. In terms of biological role, component of the ERMES/MDM complex, which serves as a molecular tether to connect the endoplasmic reticulum (ER) and mitochondria. Components of this complex are involved in the control of mitochondrial shape and protein biogenesis, and function in nonvesicular lipid trafficking between the ER and mitochondria. The MDM12-MMM1 subcomplex functions in the major beta-barrel assembly pathway that is responsible for biogenesis of all outer membrane beta-barrel proteins, and acts in a late step after the SAM complex. The MDM10-MDM12-MMM1 subcomplex further acts in the TOM40-specific pathway after the action of the MDM12-MMM1 complex. Essential for establishing and maintaining the structure of mitochondria and maintenance of mtDNA nucleoids. In Eremothecium gossypii (strain ATCC 10895 / CBS 109.51 / FGSC 9923 / NRRL Y-1056) (Yeast), this protein is Maintenance of mitochondrial morphology protein 1.